The following is a 520-amino-acid chain: Cell adhesion molecule CEACAM2 (520 aa).

The N-terminal stretch at Met1–Ala34 is a signal peptide. One can recognise an Ig-like V-type domain in the interval Gln35–His141. Over Gln35–Asp422 the chain is Extracellular. Asn87, Asn104, Asn148, Asn152, Asn175, Asn199, Asn206, Asn210, Asn226, Asn258, Asn290, Asn294, Asn304, Asn317, Asn333, and Asn361 each carry an N-linked (GlcNAc...) asparagine glycan. Ig-like C2-type domains are found at residues Leu145–Asn234, Pro239–Thr319, and Pro327–Glu411. Cys167 and Cys217 are disulfide-bonded. Cys261 and Cys301 are oxidised to a cystine. A disulfide bond links Cys346 and Cys394. Residues Val423–Ala443 form a helical membrane-spanning segment. Topologically, residues Tyr444 to Lys520 are cytoplasmic. The tract at residues Gln457–Lys520 is disordered. Residues Ser466–Asn480 are compositionally biased toward polar residues. Phosphotyrosine is present on Tyr487. The segment covering Leu490–Val513 has biased composition (polar residues). Ser502 is subject to Phosphoserine. Position 514 is a phosphotyrosine (Tyr514).

The protein belongs to the immunoglobulin superfamily. CEA family. As to quaternary structure, interacts weakly with MHV spike protein in tissue culture. In terms of tissue distribution, isoform 2 is detected in elongating spermatids within the seminiferous epithelium (at protein level). Expressed in kidney, colon, uterus, gut mononuclear cells, crypt epithelia of intestinal tissues, and to a lesser extent, in spleen. Expressed in brain including VMH, globus pallidus, ventral pallidum, striatum, olfactory bulb and hippocampus. Also detected in rectal carcinoma cell line CMT93. Isoform 2 and isoform 3 are expressed in testis. Isoform 2 is detected in seminiferous tubule, not detected in epididymal spermatozoa. Also not observed on spermatogonia, spermatocytes, round spermatids or somatic Sertoli cells. During stages I-VII of spermatogenesis, detected on the elongating spermatids. At spermiation (stage VIII) and subsequent stages IX-XII, levels are drastically reduced or absent in the seminiferous tubules. Sometimes weakly detected in the apical region of stage-VIII seminiferous epithelium. Isoform 2 level is very low in stomach, kidney, intestine, liver and spleen.

It is found in the cell membrane. Functionally, controls energy balance and peripheral insulin action. Involved in the regulation of feeding behavior particularly in the ventromedial nucleus of hypothalamus (VMH) regulation of food intake. Has a role in the regulation of metabolic rate and insulin sensitivity or resistance via effects on brown adipogenesis, sympathetic nervous outflow to brown adipose tissue, spontaneous activity and energy expenditure in skeletal muscle. In case of murine coronavirus (MHV) infection, does probably not serve as functional receptor for the virus. Its function is as follows. Isoform 2 may be an adhesion molecule contributing to cell to cell adhesion between elongating spermatids and Sertoli cells within the seminiferous epithelium. The sequence is that of Cell adhesion molecule CEACAM2 from Mus musculus (Mouse).